A 73-amino-acid polypeptide reads, in one-letter code: Sec-independent protein translocase protein TatA (73 aa).

Residues 1–21 (MGSFSIWHWLIVLVIVMLVFG) traverse the membrane as a helical segment. Residues 44–73 (KSAEDPNEQIPQSTTTAEKTVDVQAKDINK) are disordered. Residues 52-61 (QIPQSTTTAE) show a composition bias toward polar residues. The segment covering 62 to 73 (KTVDVQAKDINK) has biased composition (basic and acidic residues).

It belongs to the TatA/E family. In terms of assembly, the Tat system comprises two distinct complexes: a TatABC complex, containing multiple copies of TatA, TatB and TatC subunits, and a separate TatA complex, containing only TatA subunits. Substrates initially bind to the TatABC complex, which probably triggers association of the separate TatA complex to form the active translocon.

The protein resides in the cell inner membrane. Part of the twin-arginine translocation (Tat) system that transports large folded proteins containing a characteristic twin-arginine motif in their signal peptide across membranes. TatA could form the protein-conducting channel of the Tat system. The sequence is that of Sec-independent protein translocase protein TatA from Polynucleobacter asymbioticus (strain DSM 18221 / CIP 109841 / QLW-P1DMWA-1) (Polynucleobacter necessarius subsp. asymbioticus).